Reading from the N-terminus, the 61-residue chain is Lens epithelial cell protein LEP503 (61 aa).

Preferentially expressed in the lens epithelial cells.

The chain is Lens epithelial cell protein LEP503 (Lenep) from Rattus norvegicus (Rat).